We begin with the raw amino-acid sequence, 601 residues long: A-type ATP synthase subunit A (601 aa).

235–242 (GGFGTGKT) provides a ligand contact to ATP.

Belongs to the ATPase alpha/beta chains family. As to quaternary structure, has multiple subunits with at least A(3), B(3), C, D, E, F, H, I and proteolipid K(x).

It is found in the cell membrane. It carries out the reaction ATP + H2O + 4 H(+)(in) = ADP + phosphate + 5 H(+)(out). Functionally, component of the A-type ATP synthase that produces ATP from ADP in the presence of a proton gradient across the membrane. The A chain is the catalytic subunit. This is A-type ATP synthase subunit A from Thermofilum pendens (strain DSM 2475 / Hrk 5).